Reading from the N-terminus, the 394-residue chain is MILKELPKQRPNDFTKVLQDVEKIISYVKQKGDEALIELEEKFDKVKLTSIKFPEVDKLASQISQDLKMAIDVIFTQIYEFNNSIKPPNIIGGSANGIDYGIMWKSIERVGIYVPGGEKAYPSTLLMAGVPALVAGVKEIYVSSPPTKINSAIAYISLKLGVKEIYAIGGAQAIAAMAYGTQTVKKVDKIVGPGNIYVQAAKYLVSSDVGIDGIEGPTELVIIADETANPSNIILDLKAQAEHGRSTFLVLLSNSDKIINFVSKELDVDSNIYYVIKVNSIDEAIDIANEIAPEHLSLQISSAREYLPKVKNAGAVTLGNTPPAIIDYSAGPNHILPTNGWAKIRGGISVYDYLKMIMYASTSNPEKKLVEASKILAKYEGFVFHADSIGVRYE.

Residues Tyr113, Gln172, and Asn195 each contribute to the NAD(+) site. Residues Thr218, Gln240, and His243 each contribute to the substrate site. Gln240 and His243 together coordinate Zn(2+). Catalysis depends on proton acceptor residues Glu294 and His295. His295, Asp327, Glu380, and His385 together coordinate substrate. Residue Asp327 participates in Zn(2+) binding. His385 contacts Zn(2+).

Belongs to the histidinol dehydrogenase family. Requires Zn(2+) as cofactor.

It carries out the reaction L-histidinol + 2 NAD(+) + H2O = L-histidine + 2 NADH + 3 H(+). Its pathway is amino-acid biosynthesis; L-histidine biosynthesis; L-histidine from 5-phospho-alpha-D-ribose 1-diphosphate: step 9/9. Its function is as follows. Catalyzes the sequential NAD-dependent oxidations of L-histidinol to L-histidinaldehyde and then to L-histidine. This is Histidinol dehydrogenase from Sulfurisphaera tokodaii (strain DSM 16993 / JCM 10545 / NBRC 100140 / 7) (Sulfolobus tokodaii).